We begin with the raw amino-acid sequence, 124 residues long: Small ribosomal subunit protein uS13c (124 aa).

The disordered stretch occupies residues 100–124 (GQRTRTNARTRKGKVKTAVAKKKGR). Over residues 101–124 (QRTRTNARTRKGKVKTAVAKKKGR) the composition is skewed to basic residues.

This sequence belongs to the universal ribosomal protein uS13 family. As to quaternary structure, part of the 30S ribosomal subunit.

It localises to the plastid. It is found in the chloroplast. In terms of biological role, located at the top of the head of the 30S subunit, it contacts several helices of the 16S rRNA. This chain is Small ribosomal subunit protein uS13c, found in Emiliania huxleyi (Coccolithophore).